The primary structure comprises 762 residues: 5-methyltetrahydropteroyltriglutamate--homocysteine methyltransferase (762 aa).

5-methyltetrahydropteroyltri-L-glutamate contacts are provided by residues 17 to 20 (REWK) and Lys111. L-homocysteine contacts are provided by residues 435–437 (IGS) and Glu488. Residues 435–437 (IGS) and Glu488 each bind L-methionine. 5-methyltetrahydropteroyltri-L-glutamate is bound by residues 519 to 520 (RC) and Trp565. Asp603 lines the L-homocysteine pocket. Asp603 is a binding site for L-methionine. Glu609 contacts 5-methyltetrahydropteroyltri-L-glutamate. The Zn(2+) site is built by His645, Cys647, and Glu669. The active-site Proton donor is the His698. Cys730 lines the Zn(2+) pocket.

This sequence belongs to the vitamin-B12 independent methionine synthase family. The cofactor is Zn(2+).

The enzyme catalyses 5-methyltetrahydropteroyltri-L-glutamate + L-homocysteine = tetrahydropteroyltri-L-glutamate + L-methionine. Its pathway is amino-acid biosynthesis; L-methionine biosynthesis via de novo pathway; L-methionine from L-homocysteine (MetE route): step 1/1. Functionally, catalyzes the transfer of a methyl group from 5-methyltetrahydrofolate to homocysteine resulting in methionine formation. The sequence is that of 5-methyltetrahydropteroyltriglutamate--homocysteine methyltransferase from Bacillus cereus (strain ZK / E33L).